The primary structure comprises 216 residues: Elongation factor Ts (216 aa).

Residues 81 to 84 (TDFV) form an involved in Mg(2+) ion dislocation from EF-Tu region.

It belongs to the EF-Ts family.

The protein resides in the cytoplasm. Functionally, associates with the EF-Tu.GDP complex and induces the exchange of GDP to GTP. It remains bound to the aminoacyl-tRNA.EF-Tu.GTP complex up to the GTP hydrolysis stage on the ribosome. This is Elongation factor Ts from Geobacter metallireducens (strain ATCC 53774 / DSM 7210 / GS-15).